The primary structure comprises 338 residues: 1-aminocyclopropane-1-carboxylate deaminase (338 aa).

Lys-51 bears the N6-(pyridoxal phosphate)lysine mark. Ser-78 (nucleophile) is an active-site residue.

Belongs to the ACC deaminase/D-cysteine desulfhydrase family. In terms of assembly, homotrimer. The cofactor is pyridoxal 5'-phosphate.

It catalyses the reaction 1-aminocyclopropane-1-carboxylate + H2O = 2-oxobutanoate + NH4(+). In terms of biological role, catalyzes a cyclopropane ring-opening reaction, the irreversible conversion of 1-aminocyclopropane-1-carboxylate (ACC) to ammonia and alpha-ketobutyrate. Allows growth on ACC as a nitrogen source. This Pseudomonas syringae pv. syringae (strain B728a) protein is 1-aminocyclopropane-1-carboxylate deaminase.